A 388-amino-acid chain; its full sequence is Formate-dependent phosphoribosylglycinamide formyltransferase (388 aa).

N(1)-(5-phospho-beta-D-ribosyl)glycinamide-binding positions include 20–21 (EL) and E80. Residues R112, K153, 158–163 (SSGKGQ), 193–196 (EEFI), and E201 contribute to the ATP site. One can recognise an ATP-grasp domain in the interval 117–306 (RLAFEKLGLR…EFEIHARAIL (190 aa)). The Mg(2+) site is built by E265 and E277. Residues D284, K352, and 359–360 (RR) each bind N(1)-(5-phospho-beta-D-ribosyl)glycinamide.

Belongs to the PurK/PurT family. In terms of assembly, homodimer.

It catalyses the reaction N(1)-(5-phospho-beta-D-ribosyl)glycinamide + formate + ATP = N(2)-formyl-N(1)-(5-phospho-beta-D-ribosyl)glycinamide + ADP + phosphate + H(+). Its pathway is purine metabolism; IMP biosynthesis via de novo pathway; N(2)-formyl-N(1)-(5-phospho-D-ribosyl)glycinamide from N(1)-(5-phospho-D-ribosyl)glycinamide (formate route): step 1/1. Functionally, involved in the de novo purine biosynthesis. Catalyzes the transfer of formate to 5-phospho-ribosyl-glycinamide (GAR), producing 5-phospho-ribosyl-N-formylglycinamide (FGAR). Formate is provided by PurU via hydrolysis of 10-formyl-tetrahydrofolate. This Methanococcus maripaludis (strain C5 / ATCC BAA-1333) protein is Formate-dependent phosphoribosylglycinamide formyltransferase.